We begin with the raw amino-acid sequence, 66 residues long: Alpha-like toxin Bom3 (66 aa).

An LCN-type CS-alpha/beta domain is found at 2–66; the sequence is RDGYIAQPEN…PIVVGGEKCH (65 aa). 4 disulfide bridges follow: Cys-12–Cys-65, Cys-16–Cys-37, Cys-23–Cys-47, and Cys-27–Cys-49.

It belongs to the long (4 C-C) scorpion toxin superfamily. Sodium channel inhibitor family. Alpha subfamily. Expressed by the venom gland.

It is found in the secreted. Its function is as follows. Alpha toxins bind voltage-independently at site-3 of sodium channels (Nav) and inhibit the inactivation of the activated channels, thereby blocking neuronal transmission. As it competes neither with the classical alpha-toxin AaH2 nor the beta-toxin Css2, this toxin is an alpha-like toxin. This Buthus occitanus mardochei (Moroccan scorpion) protein is Alpha-like toxin Bom3.